A 138-amino-acid chain; its full sequence is Small ribosomal subunit protein uS11c (138 aa).

The tract at residues 1–22 is disordered; the sequence is MAKSIPRISSRRNGPIGSGKTV.

This sequence belongs to the universal ribosomal protein uS11 family. In terms of assembly, part of the 30S ribosomal subunit.

Its subcellular location is the plastid. This Cuscuta exaltata (Tall dodder) protein is Small ribosomal subunit protein uS11c.